A 510-amino-acid polypeptide reads, in one-letter code: Serine/threonine protein phosphatase 2A 57 kDa regulatory subunit B' kappa isoform (510 aa).

The interval 1 to 51 (MWKGFLSKLPRKTSASGRGADLDSGQCSNGAGNGNPIQRTSSCGSIPSGRS) is disordered. Over residues 25 to 51 (GQCSNGAGNGNPIQRTSSCGSIPSGRS) the composition is skewed to polar residues. Phosphothreonine occurs at positions 476 and 493. Position 502 is a phosphoserine (serine 502). Position 508 is a phosphothreonine (threonine 508).

Belongs to the phosphatase 2A regulatory subunit B56 family. PP2A consists of a common heteromeric enzyme, composed of a catalytic subunit (subunits C), a constant regulatory subunit (subunit A), and a variety of regulatory subunits such as subunits B (the R2/B/PR55/B55, R3/B''/PR72/PR130/PR59 and R5/B'/B56 families). Interacts with SIT1. In terms of processing, phosphorylated at Thr-476, Thr-493, Ser-502 and Thr-508 by SIT1. As to expression, expressed in root stele and epidermal cells.

Its subcellular location is the cytoplasm. It localises to the cytosol. The protein resides in the cell membrane. In terms of biological role, b regulatory subunit of phosphatase 2A (PP2A) involved in salt stress response. Under salt stress conditions, required for the catalytic activity of PP2A and the dephosphorylation of SIT1, a negative regulator of salt tolerance. Dephosphorylation of SIT1 turns off salt-induced SIT1 activity directly, which has a positive effect on salt tolerance. This Oryza sativa subsp. japonica (Rice) protein is Serine/threonine protein phosphatase 2A 57 kDa regulatory subunit B' kappa isoform.